The chain runs to 341 residues: S-adenosylmethionine:tRNA ribosyltransferase-isomerase (341 aa).

This sequence belongs to the QueA family. Monomer.

The protein resides in the cytoplasm. The enzyme catalyses 7-aminomethyl-7-carbaguanosine(34) in tRNA + S-adenosyl-L-methionine = epoxyqueuosine(34) in tRNA + adenine + L-methionine + 2 H(+). The protein operates within tRNA modification; tRNA-queuosine biosynthesis. Transfers and isomerizes the ribose moiety from AdoMet to the 7-aminomethyl group of 7-deazaguanine (preQ1-tRNA) to give epoxyqueuosine (oQ-tRNA). This Clostridium botulinum (strain Kyoto / Type A2) protein is S-adenosylmethionine:tRNA ribosyltransferase-isomerase.